A 249-amino-acid polypeptide reads, in one-letter code: NAD kinase (249 aa).

Aspartate 45 acts as the Proton acceptor in catalysis. Residues 45 to 46 (DG), arginine 50, 110 to 111 (NE), aspartate 138, and 149 to 154 (SGWGMS) each bind NAD(+).

Belongs to the NAD kinase family. Requires a divalent metal cation as cofactor.

Its subcellular location is the cytoplasm. The enzyme catalyses NAD(+) + ATP = ADP + NADP(+) + H(+). Its function is as follows. Involved in the regulation of the intracellular balance of NAD and NADP, and is a key enzyme in the biosynthesis of NADP. Catalyzes specifically the phosphorylation on 2'-hydroxyl of the adenosine moiety of NAD to yield NADP. In Saccharolobus solfataricus (strain ATCC 35092 / DSM 1617 / JCM 11322 / P2) (Sulfolobus solfataricus), this protein is NAD kinase.